A 156-amino-acid chain; its full sequence is Aspartate carbamoyltransferase regulatory chain (156 aa).

The Zn(2+) site is built by Cys-109, Cys-114, Cys-140, and Cys-143.

This sequence belongs to the PyrI family. In terms of assembly, contains catalytic and regulatory chains. The cofactor is Zn(2+).

In terms of biological role, involved in allosteric regulation of aspartate carbamoyltransferase. The polypeptide is Aspartate carbamoyltransferase regulatory chain (Methanosarcina acetivorans (strain ATCC 35395 / DSM 2834 / JCM 12185 / C2A)).